Here is a 385-residue protein sequence, read N- to C-terminus: MKEGKDGFVRADQIDLKSLDEQLERHLSRALTLEKNKKKDEEDTTAVAIGGSASSSPVTLNGGGFVGKRKQRLEWEIDPSKLIIKTVLARGTFGTVHRGIYDGQDVAVKLLDWGEEGHRSEAEIVSLRADFAQEVAVWHKLDHPNVTKFIGATMGASGLQLQTESGPLAMPNNICCVVVEYLPGGALKSYLIKNRRRKLTFKIVVQLALDLARGLSYLHSQKIVHRDVKTENMLLDKTRTVKIADFGVARVEASNPNDMTGETGTLGYMAPEVLNGNPYNRKCDVYSFGICLWEIYCCDMPYPDLTFSEVTSAVVRQNLRPDIPRCCPSALAAVMKRCWDANPDKRPEMDEVVPMLESIDTTKGGGMIPNDQQQGCLCFRRKRGP.

Residues 82 to 356 (LIIKTVLARG…PEMDEVVPML (275 aa)) enclose the Protein kinase domain. ATP is bound by residues 88 to 96 (LARGTFGTV) and K109. D227 functions as the Proton acceptor in the catalytic mechanism.

Belongs to the protein kinase superfamily. Ser/Thr protein kinase family. Binds to CBC1. Associates with PHOT1, PHOT2, BLUS1 and PM H(+)-ATPase (e.g. AHA1). Post-translationally, autophosphorylated. Phosphorylated by HT1 in response to low CO(2) concentrations. Expressed in guard cells.

It is found in the cytoplasm. It localises to the cytosol. It catalyses the reaction L-seryl-[protein] + ATP = O-phospho-L-seryl-[protein] + ADP + H(+). The catalysed reaction is L-threonyl-[protein] + ATP = O-phospho-L-threonyl-[protein] + ADP + H(+). Its function is as follows. Serine/threonine protein kinase that phosphorylates proteins on serine and threonine residues. Collectively with CBC1, acts as a negative regulator of stomatal opening, probably via the inhibition of plasma membrane-type ATPases (AHA1 and AHA2) activity in guard cells, but in an abscisic acid (ABA)-independent manner. However, at low concentrations of CO(2), together with CBC1, stimulates stomatal opening via the inhibition of S-type anion channels in response to blue light (BL) and red light (RL), thus being a key component to maximize photosynthesis in the light under low CO(2) conditions. Required for temperature decrease in leaves. Downstream target of HIGH LEAF TEMPERATURE1 (HT1) during low CO(2)-induced stomatal opening. This is Serine/threonine-protein kinase 52 from Arabidopsis thaliana (Mouse-ear cress).